The sequence spans 85 residues: Small ribosomal subunit protein uS17 (85 aa).

The protein belongs to the universal ribosomal protein uS17 family. In terms of assembly, part of the 30S ribosomal subunit.

Functionally, one of the primary rRNA binding proteins, it binds specifically to the 5'-end of 16S ribosomal RNA. The chain is Small ribosomal subunit protein uS17 from Anaeromyxobacter dehalogenans (strain 2CP-1 / ATCC BAA-258).